We begin with the raw amino-acid sequence, 234 residues long: Adenosine 5'-phosphosulfate reductase (234 aa).

Positions 120, 121, 203, and 206 each coordinate [4Fe-4S] cluster. Cys229 acts as the Nucleophile; cysteine thiosulfonate intermediate in catalysis.

The protein belongs to the PAPS reductase family. CysH subfamily. Requires [4Fe-4S] cluster as cofactor.

It localises to the cytoplasm. The enzyme catalyses [thioredoxin]-disulfide + sulfite + AMP + 2 H(+) = adenosine 5'-phosphosulfate + [thioredoxin]-dithiol. Its pathway is sulfur metabolism; hydrogen sulfide biosynthesis; sulfite from sulfate. Its function is as follows. Catalyzes the formation of sulfite from adenosine 5'-phosphosulfate (APS) using thioredoxin as an electron donor. This chain is Adenosine 5'-phosphosulfate reductase, found in Bacillus cereus (strain AH187).